Consider the following 211-residue polypeptide: N,O-diacetylmuramidase (211 aa).

Active-site residues include D6 and E100. C108 and C147 are joined by a disulfide.

It belongs to the glycosyl hydrolase 25 family.

The protein localises to the secreted. The protein resides in the extracellular space. It carries out the reaction Hydrolysis of (1-&gt;4)-beta-linkages between N-acetylmuramic acid and N-acetyl-D-glucosamine residues in a peptidoglycan and between N-acetyl-D-glucosamine residues in chitodextrins.. This enzyme has both lysozyme (acetylmuramidase) and diacetylmuramidase activities. The protein is N,O-diacetylmuramidase of Chalaropsis sp.